Reading from the N-terminus, the 156-residue chain is uncharacterized protein (156 aa).

3 helical membrane-spanning segments follow: residues 21–41 (GVLFSSFALLFMFFNSLAISL), 54–74 (TICSSLIPCRTLIFSLWIDFA), and 80–100 (SVLVCCFSASLPLVFFFWALF).

The protein localises to the membrane. This is an uncharacterized protein from Saccharomyces cerevisiae (strain ATCC 204508 / S288c) (Baker's yeast).